The chain runs to 331 residues: Probable staphylococcal-like nuclease CAN1 (331 aa).

A lipid anchor (N-myristoyl glycine) is attached at Gly2. Cys10 carries the S-palmitoyl cysteine lipid modification. Residues 136 to 313 (HTLPVDAKAV…QSGRKGLWAA (178 aa)) form the TNase-like domain. Asp149 contributes to the Ca(2+) binding site. Residue Arg220 is part of the active site. Residue Asp225 participates in Ca(2+) binding. Active-site residues include Glu228 and Arg262. Residues 306-331 (GRKGLWAASRPQKPWEWRRDKRNGTA) are disordered. Positions 318 to 331 (KPWEWRRDKRNGTA) are enriched in basic and acidic residues.

It belongs to the thermonuclease family. It depends on Ca(2+) as a cofactor.

The protein resides in the cell membrane. Enzyme that catalyzes the hydrolysis of both DNA and RNA at the 5' position of the phosphodiester bond. This chain is Probable staphylococcal-like nuclease CAN1, found in Oryza sativa subsp. japonica (Rice).